We begin with the raw amino-acid sequence, 233 residues long: Snake venom serine protease ussurase (233 aa).

Positions 1-224 constitute a Peptidase S1 domain; that stretch reads VIGGVECNIN…YTDWIQSIIS (224 aa). Cystine bridges form between C7–C138, C25–C41, C73–C231, C117–C185, C149–C164, and C175–C200. The active-site Charge relay system is H40. The N-linked (GlcNAc...) asparagine glycan is linked to N54. The active-site Charge relay system is D85. Catalysis depends on S179, which acts as the Charge relay system.

This sequence belongs to the peptidase S1 family. Snake venom subfamily. As to quaternary structure, monomer. As to expression, expressed by the venom gland.

The protein localises to the secreted. Functionally, snake venom serine protease that may act in the hemostasis system of the prey. The chain is Snake venom serine protease ussurase from Gloydius ussuriensis (Ussuri mamushi).